A 489-amino-acid chain; its full sequence is Netrin-5 (489 aa).

The N-terminal stretch at 1-16 is a signal peptide; that stretch reads MPVTFALLLLLGQATA. N62 carries an N-linked (GlcNAc...) asparagine glycan. Intrachain disulfides connect C157–C166, C159–C175, C177–C186, C189–C209, C212–C221, C214–C239, C242–C251, C254–C272, C275–C287, C277–C294, C296–C305, C308–C322, C345–C418, C349–C420, and C364–C475. Laminin EGF-like domains follow at residues 157–211, 212–274, and 275–324; these read CQCH…PCLP, CSCN…ACRA, and CQCH…PCQR. Residues 345 to 475 form the NTR domain; that stretch reads CQNYCNMSDT…LQQEERAGGC (131 aa). A disordered region spans residues 470–489; it reads ERAGGCRGVRAPTPSPRPEH.

It is found in the secreted. In terms of biological role, plays a role in neurogenesis. Prevents motor neuron cell body migration out of the neural tube. In Homo sapiens (Human), this protein is Netrin-5 (NTN5).